A 1591-amino-acid chain; its full sequence is Rho guanine nucleotide exchange factor TIAM1 (1591 aa).

The interval 1–70 (MGNAESQNVD…TPSIPQSLAE (70 aa)) is disordered. G2 carries N-myristoyl glycine lipidation. Residues 8-19 (NVDHEFYGEKHA) are compositionally biased toward basic and acidic residues. The segment covering 20-49 (SLGRKHTSRSLRLSHKTRRTRHASSGKAIH) has biased composition (basic residues). Positions 53–67 (EVSTRSSSTPSIPQS) are enriched in low complexity. Residues S231, S356, and S358 each carry the phosphoserine modification. Disordered stretches follow at residues 305-380 (QISL…DRAR) and 393-422 (MSTTNSESLEEAGSAHSDEQSSGTLSSPGQ). The span at 340 to 359 (TTDTDLLSRRSNATNSSYSP) shows a compositional bias: polar residues. The span at 367-376 (GSDSGSSSTG) shows a compositional bias: low complexity. A compositionally biased stretch (polar residues) spans 412 to 422 (QSSGTLSSPGQ). The PH 1 domain maps to 434–549 (VRKAGALAVK…TAIHSACAAA (116 aa)). S695 carries the phosphoserine modification. In terms of domain architecture, RBD spans 765 to 832 (TPSWFCLPNN…QPEEDIYELL (68 aa)). The residue at position 829 (Y829) is a Phosphotyrosine; by NTRK2. Residues 845–908 (NIHIEKSDAA…NNRAAGTLNS (64 aa)) enclose the PDZ domain. The disordered stretch occupies residues 933–1034 (GVELLENPPH…TSPQLATTRQ (102 aa)). Over residues 958–975 (LTSNPGHSLSSEQGSSAE) the composition is skewed to polar residues. Over residues 977 to 990 (APEEGEGPDLESSD) the composition is skewed to acidic residues. The span at 1014-1028 (PSDSSPSPQDATSPQ) shows a compositional bias: low complexity. Residues 1040–1234 (KLRKVICELL…NKVASHINEM (195 aa)) form the DH domain. The PH 2 domain occupies 1261 to 1397 (DLSMGDLLLH…KSVHSILRDK (137 aa)). At Y1323 the chain carries Phosphotyrosine. Residues K1404 and K1420 each participate in a glycyl lysine isopeptide (Lys-Gly) (interchain with G-Cter in ubiquitin) cross-link. A disordered region spans residues 1456–1481 (TIDSDAISASSPEKEPQQPAGGGDTD). At S1519 the chain carries Phosphoserine.

The protein belongs to the TIAM family. In terms of assembly, component of the Par polarity complex, composed of at least phosphorylated PRKCZ, PARD3 and TIAM1. Interacts with BAIAP2. Interacts (via PDZ domain) with CNTNAP4, SDC1 and SDC3 (via C-terminus). Interacts with CD44, PARD3 and MAPK8IP2. Interacts with EPHA8; regulates clathrin-mediated endocytosis of EPHA8. Interacts with NTRK2; mediates the activation of RAC1 by BDNF. In terms of processing, ubiquitinated. Undergoes 'Lys-48' ubiquitination at Lys-1404 and Lys-1420 by a CUL3(KBTBD6/7) E3 ubiquitin ligase complex composed of CUL3, RBX1, KBTBD6 and KBTBD7. 'Lys-48' ubiquitination at Lys-1404 and Lys-1420 triggers proteasomal degradation. Ubiquitination at Lys-1404 and Lys-1420 by CUL3(KBTBD6/7) also requires the membrane-associated protein GABARAP and may therefore be spatially restricted within the cell. Highly expressed in brain and testis and at low or moderate levels in almost all other normal tissues. Found in virtually all analyzed tumor cell lines including B- and T-lymphomas, neuroblastomas, melanomas and carcinomas.

The protein resides in the cell junction. The protein localises to the cell membrane. In terms of biological role, guanyl-nucleotide exchange factor that activates RHO-like proteins and connects extracellular signals to cytoskeletal activities. Activates RAC1, CDC42, and to a lesser extent RHOA and their downstream signaling to regulate processes like cell adhesion and cell migration. The chain is Rho guanine nucleotide exchange factor TIAM1 from Mus musculus (Mouse).